A 229-amino-acid chain; its full sequence is Ribose-5-phosphate isomerase A (229 aa).

Residues 28–31 (TGST), 85–88 (DGAD), and 98–101 (KGRG) contribute to the substrate site. Glu107 functions as the Proton acceptor in the catalytic mechanism. Lys125 contacts substrate.

The protein belongs to the ribose 5-phosphate isomerase family. In terms of assembly, homodimer.

It carries out the reaction aldehydo-D-ribose 5-phosphate = D-ribulose 5-phosphate. It functions in the pathway carbohydrate degradation; pentose phosphate pathway; D-ribose 5-phosphate from D-ribulose 5-phosphate (non-oxidative stage): step 1/1. In terms of biological role, catalyzes the reversible conversion of ribose-5-phosphate to ribulose 5-phosphate. The chain is Ribose-5-phosphate isomerase A from Pyrococcus furiosus (strain ATCC 43587 / DSM 3638 / JCM 8422 / Vc1).